A 724-amino-acid chain; its full sequence is Golgin subfamily A member 6-like protein 6 (724 aa).

Disordered stretches follow at residues 1-108 (MLMW…HQEA), 314-342 (QEEK…MRRQ), 374-454 (MHEQ…EMWR), 517-548 (QEEM…KMWR), and 561-724 (WRQE…MQEH). Positions 15–29 (LPTHPHLPTHPHLPT) are enriched in basic residues. Residues 39 to 60 (MSKETRQSKLAEAKEQLTDHHP) are compositionally biased toward basic and acidic residues. Polar residues-rich tracts occupy residues 61–71 (QTNPSVGTAAS) and 79–91 (NNGT…TSGG). The span at 94-108 (SPEDEQKASHQHQEA) shows a compositional bias: basic and acidic residues. Residues 164–686 (ELEQALSAVA…EKMWEQEEKM (523 aa)) are a coiled coil.

This sequence belongs to the GOLGA6 family.

The protein is Golgin subfamily A member 6-like protein 6 (GOLGA6L6) of Homo sapiens (Human).